A 180-amino-acid chain; its full sequence is ATP synthase subunit b 2 (180 aa).

The helical transmembrane segment at 33–53 (IFWLLVTLVAIYFLLTRVALP) threads the bilayer.

The protein belongs to the ATPase B chain family. As to quaternary structure, F-type ATPases have 2 components, F(1) - the catalytic core - and F(0) - the membrane proton channel. F(1) has five subunits: alpha(3), beta(3), gamma(1), delta(1), epsilon(1). F(0) has three main subunits: a(1), b(2) and c(10-14). The alpha and beta chains form an alternating ring which encloses part of the gamma chain. F(1) is attached to F(0) by a central stalk formed by the gamma and epsilon chains, while a peripheral stalk is formed by the delta and b chains.

Its subcellular location is the cell inner membrane. Functionally, f(1)F(0) ATP synthase produces ATP from ADP in the presence of a proton or sodium gradient. F-type ATPases consist of two structural domains, F(1) containing the extramembraneous catalytic core and F(0) containing the membrane proton channel, linked together by a central stalk and a peripheral stalk. During catalysis, ATP synthesis in the catalytic domain of F(1) is coupled via a rotary mechanism of the central stalk subunits to proton translocation. Component of the F(0) channel, it forms part of the peripheral stalk, linking F(1) to F(0). The b'-subunit is a diverged and duplicated form of b found in plants and photosynthetic bacteria. In Cereibacter sphaeroides (strain ATCC 17025 / ATH 2.4.3) (Rhodobacter sphaeroides), this protein is ATP synthase subunit b 2 (atpF2).